Consider the following 246-residue polypeptide: uncharacterized protein (246 aa).

Belongs to the IIV-6 170L family.

This is an uncharacterized protein from Acheta domesticus (House cricket).